A 484-amino-acid chain; its full sequence is uncharacterized protein (484 aa).

Transmembrane regions (helical) follow at residues 19–39, 78–98, 110–130, 134–154, 165–185, 199–219, 249–269, 289–309, 321–341, 360–380, 398–418, and 440–460; these read LSFG…MIFV, VNWG…WLIV, LFFM…GFII, IFAI…SNYL, FSPF…AGII, IVFL…IILG, TWYW…PFTF, ISVF…TIGL, ISTI…VFVL, LFLF…GVML, FGLI…ITSL, and LGAY…LALL.

The protein resides in the cell membrane. This is an uncharacterized protein from Mesomycoplasma hyopneumoniae (strain J / ATCC 25934 / NCTC 10110) (Mycoplasma hyopneumoniae).